The sequence spans 196 residues: MKITSTIIQTPFPFENNNSHAGIVTEPILGKLIGQGSTAEIFEDVNDSSALYKKYDLIGNQYNEILEMAWQESELFNAFYGDEASVVIQYGGDVYLRMLRVPGTPLSDIDTADIPDNIESLYLQLICKLNELSIIHYDLNTGNMLYDKESESLFPIDFRNIYAEYYAATKKDKEIIDRRLQMRTNDFYSLLNRKYL.

It belongs to the protein kinase superfamily. Post-translationally, autophosphorylated.

The protein localises to the secreted. Its subcellular location is the host cell. In terms of biological role, effector proteins function to alter host cell physiology and promote bacterial survival in host tissues. This protein is a kinase that is involved in down-regulation of the host innate response induced by invasive bacteria. This Shigella flexneri serotype X (strain 2002017) protein is Protein kinase OspG (ospG).